The chain runs to 556 residues: Copine-7 (556 aa).

C2 domains lie at 1–128 (MSGD…TRPL) and 135–262 (NAGK…AQWD). Ca(2+) is bound by residues D168, D174, D230, D232, and D238. Residues 305–504 (HCTVAIDFTA…PALRDIVQFV (200 aa)) enclose the VWFA domain. The interval 536–556 (KDLPPRSLGGQTGEAGPSSAP) is disordered.

The protein belongs to the copine family. It depends on Ca(2+) as a cofactor.

It is found in the cytoplasm. The protein localises to the nucleus. Its subcellular location is the cell membrane. In terms of biological role, calcium-dependent phospholipid-binding protein that may play a role in calcium-mediated intracellular processes. The polypeptide is Copine-7 (Rattus norvegicus (Rat)).